The chain runs to 99 residues: Keratinocyte differentiation-associated protein (99 aa).

The first 22 residues, 1–22, serve as a signal peptide directing secretion; the sequence is MKIPVLPAVVLLSLLVLHSAQG.

Highly expressed in skin and detected at lower levels in thymus. In skin, found exclusively in lamellar granules of granular keratinocytes and in the intracellular space of the stratum corneum. Also highly expressed in oral mucosa, tongue, esophagus, and stomach, and at much lower levels in bladder and uterus. Not detected in gastrointestinal mucosa.

It localises to the secreted. May act as a soluble regulator of keratinocyte differentiation. May play an important role in embryonic skin morphogenesis. The protein is Keratinocyte differentiation-associated protein (KRTDAP) of Homo sapiens (Human).